We begin with the raw amino-acid sequence, 222 residues long: 7-cyano-7-deazaguanine synthase (222 aa).

Position 8–18 (8–18 (LSGGLDSTTCL)) interacts with ATP. Zn(2+)-binding residues include cysteine 186, cysteine 194, cysteine 197, and cysteine 200.

The protein belongs to the QueC family. As to quaternary structure, homodimer. Requires Zn(2+) as cofactor.

The enzyme catalyses 7-carboxy-7-deazaguanine + NH4(+) + ATP = 7-cyano-7-deazaguanine + ADP + phosphate + H2O + H(+). The protein operates within purine metabolism; 7-cyano-7-deazaguanine biosynthesis. Catalyzes the ATP-dependent conversion of 7-carboxy-7-deazaguanine (CDG) to 7-cyano-7-deazaguanine (preQ(0)). This chain is 7-cyano-7-deazaguanine synthase, found in Acetivibrio thermocellus (strain ATCC 27405 / DSM 1237 / JCM 9322 / NBRC 103400 / NCIMB 10682 / NRRL B-4536 / VPI 7372) (Clostridium thermocellum).